Here is a 272-residue protein sequence, read N- to C-terminus: Short-chain dehydrogenase reductase ATA1 (272 aa).

An NADP(+)-binding site is contributed by 14-38 (IITGGARGIGAATARLFTENGAYVI). S143 lines the substrate pocket. The Proton acceptor role is filled by Y156. K160 lines the NADP(+) pocket.

This sequence belongs to the short-chain dehydrogenases/reductases (SDR) family. In terms of tissue distribution, expressed specifically in tapetal cells.

May play a role in tapetum development. The sequence is that of Short-chain dehydrogenase reductase ATA1 from Arabidopsis thaliana (Mouse-ear cress).